The sequence spans 439 residues: C4-dicarboxylate transport protein (439 aa).

9 consecutive transmembrane segments (helical) span residues 9–29 (HLYF…YYMP), 45–65 (MIKM…IAGM), 80–100 (LYFE…INVI), 150–170 (GEIL…SAMG), 186–206 (AFFG…FGAM), 221–241 (LGML…VVLG), 291–311 (VVGL…SIYL), 334–354 (ILGV…SGFV), and 357–377 (AATF…ILGI).

This sequence belongs to the dicarboxylate/amino acid:cation symporter (DAACS) (TC 2.A.23) family.

The protein resides in the cell inner membrane. Functionally, responsible for the transport of dicarboxylates such as succinate, fumarate, and malate from the periplasm across the membrane. The chain is C4-dicarboxylate transport protein from Citrifermentans bemidjiense (strain ATCC BAA-1014 / DSM 16622 / JCM 12645 / Bem) (Geobacter bemidjiensis).